The primary structure comprises 250 residues: Ribosomal RNA small subunit methyltransferase J (250 aa).

Residues 102 to 103, 118 to 119, 154 to 155, and aspartate 172 contribute to the S-adenosyl-L-methionine site; these read RD, ER, and SS.

Belongs to the methyltransferase superfamily. RsmJ family.

The protein localises to the cytoplasm. It carries out the reaction guanosine(1516) in 16S rRNA + S-adenosyl-L-methionine = N(2)-methylguanosine(1516) in 16S rRNA + S-adenosyl-L-homocysteine + H(+). Functionally, specifically methylates the guanosine in position 1516 of 16S rRNA. The chain is Ribosomal RNA small subunit methyltransferase J from Edwardsiella ictaluri (strain 93-146).